The sequence spans 938 residues: Isoleucine--tRNA ligase (938 aa).

The short motif at 58–68 (PYANGSIHIGH) is the 'HIGH' region element. N6-acetyllysine is present on Lys183. L-isoleucyl-5'-AMP is bound at residue Glu561. Positions 602–606 (KMSKS) match the 'KMSKS' region motif. Lys605 contacts ATP. Residues Cys901, Cys904, Cys921, and Cys924 each contribute to the Zn(2+) site.

This sequence belongs to the class-I aminoacyl-tRNA synthetase family. IleS type 1 subfamily. In terms of assembly, monomer. Zn(2+) is required as a cofactor.

Its subcellular location is the cytoplasm. It carries out the reaction tRNA(Ile) + L-isoleucine + ATP = L-isoleucyl-tRNA(Ile) + AMP + diphosphate. Its function is as follows. Catalyzes the attachment of isoleucine to tRNA(Ile). As IleRS can inadvertently accommodate and process structurally similar amino acids such as valine, to avoid such errors it has two additional distinct tRNA(Ile)-dependent editing activities. One activity is designated as 'pretransfer' editing and involves the hydrolysis of activated Val-AMP. The other activity is designated 'posttransfer' editing and involves deacylation of mischarged Val-tRNA(Ile). This chain is Isoleucine--tRNA ligase, found in Escherichia coli (strain ATCC 8739 / DSM 1576 / NBRC 3972 / NCIMB 8545 / WDCM 00012 / Crooks).